A 564-amino-acid polypeptide reads, in one-letter code: Threonine--tRNA ligase (564 aa).

A catalytic region spans residues 167 to 464; the sequence is DHRAIGKRLE…LLEKTHGNLP (298 aa). Zn(2+) is bound by residues Cys260, His311, and His441.

Belongs to the class-II aminoacyl-tRNA synthetase family. Homodimer. Requires Zn(2+) as cofactor.

The protein resides in the cytoplasm. It carries out the reaction tRNA(Thr) + L-threonine + ATP = L-threonyl-tRNA(Thr) + AMP + diphosphate + H(+). Catalyzes the attachment of threonine to tRNA(Thr) in a two-step reaction: L-threonine is first activated by ATP to form Thr-AMP and then transferred to the acceptor end of tRNA(Thr). Also edits incorrectly charged L-seryl-tRNA(Thr). This is Threonine--tRNA ligase from Mycoplasma pneumoniae (strain ATCC 29342 / M129 / Subtype 1) (Mycoplasmoides pneumoniae).